The chain runs to 635 residues: Probable retaining alpha-galactosidase (635 aa).

The first 30 residues, 1–30 (MARSVRRTTLALLLSAVLAMTLFVTAPAHA), serve as a signal peptide directing secretion. Aspartate 179 lines the Ca(2+) pocket. The active-site Nucleophile is aspartate 397. Ca(2+) is bound by residues glutamate 446 and glutamate 452. Glutamate 452 serves as the catalytic Proton donor/acceptor.

It belongs to the glycosyl hydrolase 97 family. Ca(2+) serves as cofactor.

The enzyme catalyses Hydrolysis of terminal, non-reducing alpha-D-galactose residues in alpha-D-galactosides, including galactose oligosaccharides, galactomannans and galactolipids.. The protein is Probable retaining alpha-galactosidase of Streptomyces bingchenggensis (strain BCW-1).